Reading from the N-terminus, the 332-residue chain is DNA-directed RNA polymerase subunit alpha (332 aa).

The interval 2–234 (TVTANQVLRP…DQLSVFGDFT (233 aa)) is alpha N-terminal domain (alpha-NTD). An alpha C-terminal domain (alpha-CTD) region spans residues 248–332 (VDPVLLRPID…AGVAQHGMLG (85 aa)).

It belongs to the RNA polymerase alpha chain family. As to quaternary structure, homodimer. The RNAP catalytic core consists of 2 alpha, 1 beta, 1 beta' and 1 omega subunit. When a sigma factor is associated with the core the holoenzyme is formed, which can initiate transcription.

The catalysed reaction is RNA(n) + a ribonucleoside 5'-triphosphate = RNA(n+1) + diphosphate. Functionally, DNA-dependent RNA polymerase catalyzes the transcription of DNA into RNA using the four ribonucleoside triphosphates as substrates. The polypeptide is DNA-directed RNA polymerase subunit alpha (Xanthomonas axonopodis pv. citri (strain 306)).